Consider the following 651-residue polypeptide: DNA ligase (651 aa).

Residues 30-34, 79-80, and Glu-105 contribute to the NAD(+) site; these read DEEYD and SM. Catalysis depends on Lys-107, which acts as the N6-AMP-lysine intermediate. Positions 128, 162, and 301 each coordinate NAD(+). Zn(2+) contacts are provided by Cys-395, Cys-398, Cys-411, and Cys-416. The 82-residue stretch at 570 to 651 folds into the BRCT domain; sequence ALNENISNKT…NALLGGDDEV (82 aa).

The protein belongs to the NAD-dependent DNA ligase family. LigA subfamily. Requires Mg(2+) as cofactor. Mn(2+) serves as cofactor.

The catalysed reaction is NAD(+) + (deoxyribonucleotide)n-3'-hydroxyl + 5'-phospho-(deoxyribonucleotide)m = (deoxyribonucleotide)n+m + AMP + beta-nicotinamide D-nucleotide.. Its function is as follows. DNA ligase that catalyzes the formation of phosphodiester linkages between 5'-phosphoryl and 3'-hydroxyl groups in double-stranded DNA using NAD as a coenzyme and as the energy source for the reaction. It is essential for DNA replication and repair of damaged DNA. The polypeptide is DNA ligase (Campylobacter lari (strain RM2100 / D67 / ATCC BAA-1060)).